Here is a 141-residue protein sequence, read N- to C-terminus: Putative pre-16S rRNA nuclease (141 aa).

Belongs to the YqgF nuclease family.

It localises to the cytoplasm. In terms of biological role, could be a nuclease involved in processing of the 5'-end of pre-16S rRNA. This is Putative pre-16S rRNA nuclease from Histophilus somni (strain 129Pt) (Haemophilus somnus).